A 404-amino-acid polypeptide reads, in one-letter code: Glycosylated lysosomal membrane protein B (404 aa).

The first 24 residues, 1–24, serve as a signal peptide directing secretion; sequence MSCTRGWRLILLGLLCVGLLGTRG. The Lumenal segment spans residues 25–364; the sequence is QDESRKVSVQ…YGDPPRDSFS (340 aa). 15 N-linked (GlcNAc...) asparagine glycosylation sites follow: Asn85, Asn124, Asn128, Asn142, Asn152, Asn156, Asn163, Asn168, Asn178, Asn189, Asn205, Asn221, Asn266, Asn303, and Asn330. Residues 365 to 385 form a helical membrane-spanning segment; that stretch reads ILVICIMAVALGTPLLLLIIG. The Cytoplasmic segment spans residues 386-404; that stretch reads TVLVTAVRHKVYPNYQPIN. The short motif at 400 to 404 is the Lysosomal targeting motif element; the sequence is YQPIN.

Belongs to the GLMP family. As to quaternary structure, interacts (via lumenal domain) with lysosomal protein MFSD1; the interaction starts while both proteins are still in the endoplasmic reticulum and is required for stabilization of MFSD1 in lysosomes but has no direct effect on its targeting to lysosomes or transporter activity.

It localises to the lysosome membrane. In terms of biological role, required to protect lysosomal transporter MFSD1 from lysosomal proteolysis and for MFSD1 lysosomal localization. This Xenopus laevis (African clawed frog) protein is Glycosylated lysosomal membrane protein B (glmp-b).